Reading from the N-terminus, the 200-residue chain is Protein GrpE (200 aa).

The tract at residues D15–E47 is disordered. Over residues L16 to E47 the composition is skewed to acidic residues.

Belongs to the GrpE family. Homodimer.

It is found in the cytoplasm. Functionally, participates actively in the response to hyperosmotic and heat shock by preventing the aggregation of stress-denatured proteins, in association with DnaK and GrpE. It is the nucleotide exchange factor for DnaK and may function as a thermosensor. Unfolded proteins bind initially to DnaJ; upon interaction with the DnaJ-bound protein, DnaK hydrolyzes its bound ATP, resulting in the formation of a stable complex. GrpE releases ADP from DnaK; ATP binding to DnaK triggers the release of the substrate protein, thus completing the reaction cycle. Several rounds of ATP-dependent interactions between DnaJ, DnaK and GrpE are required for fully efficient folding. This chain is Protein GrpE, found in Clostridium tetani (strain Massachusetts / E88).